A 165-amino-acid polypeptide reads, in one-letter code: 6,7-dimethyl-8-ribityllumazine synthase 2 (165 aa).

Residues W24, 56 to 58 (SFE), and 80 to 82 (LVV) contribute to the 5-amino-6-(D-ribitylamino)uracil site. The Proton donor role is filled by R88. 5-amino-6-(D-ribitylamino)uracil is bound at residue S113. H127 provides a ligand contact to (2S)-2-hydroxy-3-oxobutyl phosphate.

It belongs to the DMRL synthase family.

The enzyme catalyses (2S)-2-hydroxy-3-oxobutyl phosphate + 5-amino-6-(D-ribitylamino)uracil = 6,7-dimethyl-8-(1-D-ribityl)lumazine + phosphate + 2 H2O + H(+). It participates in cofactor biosynthesis; riboflavin biosynthesis; riboflavin from 2-hydroxy-3-oxobutyl phosphate and 5-amino-6-(D-ribitylamino)uracil: step 1/2. Its function is as follows. Catalyzes the formation of 6,7-dimethyl-8-ribityllumazine by condensation of 5-amino-6-(D-ribitylamino)uracil with 3,4-dihydroxy-2-butanone 4-phosphate. This is the penultimate step in the biosynthesis of riboflavin. The polypeptide is 6,7-dimethyl-8-ribityllumazine synthase 2 (Bradyrhizobium diazoefficiens (strain JCM 10833 / BCRC 13528 / IAM 13628 / NBRC 14792 / USDA 110)).